We begin with the raw amino-acid sequence, 236 residues long: 2-C-methyl-D-erythritol 4-phosphate cytidylyltransferase (236 aa).

The protein belongs to the IspD/TarI cytidylyltransferase family. IspD subfamily. As to quaternary structure, homodimer.

The enzyme catalyses 2-C-methyl-D-erythritol 4-phosphate + CTP + H(+) = 4-CDP-2-C-methyl-D-erythritol + diphosphate. It functions in the pathway isoprenoid biosynthesis; isopentenyl diphosphate biosynthesis via DXP pathway; isopentenyl diphosphate from 1-deoxy-D-xylulose 5-phosphate: step 2/6. Its function is as follows. Catalyzes the formation of 4-diphosphocytidyl-2-C-methyl-D-erythritol from CTP and 2-C-methyl-D-erythritol 4-phosphate (MEP). This chain is 2-C-methyl-D-erythritol 4-phosphate cytidylyltransferase, found in Klebsiella pneumoniae subsp. pneumoniae (strain ATCC 700721 / MGH 78578).